A 143-amino-acid chain; its full sequence is Large ribosomal subunit protein uL11 (143 aa).

Belongs to the universal ribosomal protein uL11 family. Part of the ribosomal stalk of the 50S ribosomal subunit. Interacts with L10 and the large rRNA to form the base of the stalk. L10 forms an elongated spine to which L12 dimers bind in a sequential fashion forming a multimeric L10(L12)X complex. Post-translationally, one or more lysine residues are methylated.

Forms part of the ribosomal stalk which helps the ribosome interact with GTP-bound translation factors. The chain is Large ribosomal subunit protein uL11 from Marinobacter nauticus (strain ATCC 700491 / DSM 11845 / VT8) (Marinobacter aquaeolei).